A 468-amino-acid chain; its full sequence is Histone acetyltransferase type B catalytic subunit (468 aa).

S8 carries the phosphoserine modification. Interaction with histone H4 N-terminus stretches follow at residues 44–46 (EEE) and 208–210 (YKF). Acetyl-CoA is bound by residues 248–250 (FLI) and 255–261 (QKSGNGS). E283 acts as the Proton donor/acceptor in catalysis. A disordered region spans residues 442–468 (SSNLKRKLDDDENTEGSSSKKARVEDA).

The protein belongs to the HAT1 family. As to quaternary structure, component of the HAT-B complex composed of at least HAT1 and HAT2. The HAT-B complex binds to histone H4 tail. In the nucleus, interacts with GSK1 and SSB1. In the cytoplasm, interacts with ATG3 and ATG9. In terms of processing, phosphorylated at Ser-8 by GSK1 in the nucleus which impairs its translocation to the cytoplasm through interfering the interaction between HAT1 and SSB1. Dephosphorylation under nutrient starvation conditions promotes the interaction between HAT1 and SSB1 and results in the translocation of HAT1 from the nucleus to the cytoplasm in order to acetylate ATG3 and ATG9.

The protein resides in the nucleus. It is found in the cytoplasm. Its subcellular location is the preautophagosomal structure. It carries out the reaction L-lysyl-[protein] + acetyl-CoA = N(6)-acetyl-L-lysyl-[protein] + CoA + H(+). Its function is as follows. Catalytic component of the histone acetylase B (HAT-B) complex. Has intrinsic substrate specificity that modifies lysine in recognition sequence GXGKXG. Involved in DNA double-strand break repair. Required for appressorium turgor pressure, autophagy and conidial nuclear degradation. During the germination process and upon starvation conditions, translocates from the nucleus to the cytoplasm where it acetylates ATG3 at 'lys-262' and 'Lys-267', thus influencing autophagy through controlling ATG3-ATG8 interaction. Also acetylates ATG9 at 'Lys-621' to regulate ATG9 binding to vesicles, which is also important for autophagy and pathogenicity. The sequence is that of Histone acetyltransferase type B catalytic subunit from Pyricularia oryzae (strain 70-15 / ATCC MYA-4617 / FGSC 8958) (Rice blast fungus).